The chain runs to 126 residues: Large-conductance mechanosensitive channel (126 aa).

A run of 2 helical transmembrane segments spans residues 17-37 (VDLAVGVIIGAAFGKIVSSFI) and 70-90 (GLFLSAVINFIIVAFVLFLII).

The protein belongs to the MscL family. As to quaternary structure, homopentamer.

The protein localises to the cell inner membrane. Channel that opens in response to stretch forces in the membrane lipid bilayer. May participate in the regulation of osmotic pressure changes within the cell. The polypeptide is Large-conductance mechanosensitive channel (Flavobacterium johnsoniae (strain ATCC 17061 / DSM 2064 / JCM 8514 / BCRC 14874 / CCUG 350202 / NBRC 14942 / NCIMB 11054 / UW101) (Cytophaga johnsonae)).